The sequence spans 140 residues: Large-conductance mechanosensitive channel (140 aa).

Transmembrane regions (helical) follow at residues 16-36 and 86-106; these read VVDLAVGVIIGAAFGKIVDSI and GSFLTIVLNFLILAFIIFLMV.

This sequence belongs to the MscL family. In terms of assembly, homopentamer.

Its subcellular location is the cell inner membrane. Its function is as follows. Channel that opens in response to stretch forces in the membrane lipid bilayer. May participate in the regulation of osmotic pressure changes within the cell. In Anaeromyxobacter sp. (strain K), this protein is Large-conductance mechanosensitive channel.